The following is a 129-amino-acid chain: UPF0225 protein XC_4246 (129 aa).

This sequence belongs to the UPF0225 family.

The sequence is that of UPF0225 protein XC_4246 from Xanthomonas campestris pv. campestris (strain 8004).